We begin with the raw amino-acid sequence, 220 residues long: Probable septum site-determining protein MinC (220 aa).

This sequence belongs to the MinC family. In terms of assembly, interacts with MinD and FtsZ.

Functionally, cell division inhibitor that blocks the formation of polar Z ring septums. Rapidly oscillates between the poles of the cell to destabilize FtsZ filaments that have formed before they mature into polar Z rings. Prevents FtsZ polymerization. This chain is Probable septum site-determining protein MinC, found in Vibrio vulnificus (strain CMCP6).